A 220-amino-acid chain; its full sequence is Ribose-5-phosphate isomerase A (220 aa).

Substrate-binding positions include 25–28 (TGST), 80–83 (DGAD), and 93–96 (KGGG). The Proton acceptor role is filled by Glu-102. Lys-120 contributes to the substrate binding site.

This sequence belongs to the ribose 5-phosphate isomerase family. Homodimer.

It carries out the reaction aldehydo-D-ribose 5-phosphate = D-ribulose 5-phosphate. The protein operates within carbohydrate degradation; pentose phosphate pathway; D-ribose 5-phosphate from D-ribulose 5-phosphate (non-oxidative stage): step 1/1. In terms of biological role, catalyzes the reversible conversion of ribose-5-phosphate to ribulose 5-phosphate. The protein is Ribose-5-phosphate isomerase A of Bacillus cereus (strain ATCC 14579 / DSM 31 / CCUG 7414 / JCM 2152 / NBRC 15305 / NCIMB 9373 / NCTC 2599 / NRRL B-3711).